We begin with the raw amino-acid sequence, 269 residues long: Putative pyruvate, phosphate dikinase regulatory protein (269 aa).

Position 147–154 (147–154) interacts with ADP; sequence GLSRTSKT.

It belongs to the pyruvate, phosphate/water dikinase regulatory protein family. PDRP subfamily.

It carries out the reaction N(tele)-phospho-L-histidyl/L-threonyl-[pyruvate, phosphate dikinase] + ADP = N(tele)-phospho-L-histidyl/O-phospho-L-threonyl-[pyruvate, phosphate dikinase] + AMP + H(+). It catalyses the reaction N(tele)-phospho-L-histidyl/O-phospho-L-threonyl-[pyruvate, phosphate dikinase] + phosphate + H(+) = N(tele)-phospho-L-histidyl/L-threonyl-[pyruvate, phosphate dikinase] + diphosphate. Functionally, bifunctional serine/threonine kinase and phosphorylase involved in the regulation of the pyruvate, phosphate dikinase (PPDK) by catalyzing its phosphorylation/dephosphorylation. This Clostridium botulinum (strain ATCC 19397 / Type A) protein is Putative pyruvate, phosphate dikinase regulatory protein.